Reading from the N-terminus, the 251-residue chain is 5'-nucleotidase SurE (251 aa).

A divalent metal cation is bound by residues D8, D9, S39, and N91.

Belongs to the SurE nucleotidase family. Requires a divalent metal cation as cofactor.

The protein localises to the cytoplasm. The catalysed reaction is a ribonucleoside 5'-phosphate + H2O = a ribonucleoside + phosphate. Its function is as follows. Nucleotidase that shows phosphatase activity on nucleoside 5'-monophosphates. The polypeptide is 5'-nucleotidase SurE (Thioalkalivibrio sulfidiphilus (strain HL-EbGR7)).